The chain runs to 216 residues: Elongation factor 1-beta (216 aa).

This sequence belongs to the EF-1-beta/EF-1-delta family. EF-1 is composed of 4 subunits: alpha, beta, delta, and gamma. Interacts with actin.

The protein resides in the cytoplasm. EF-1-beta and EF-1-delta stimulate the exchange of GDP bound to EF-1-alpha to GTP. This Dictyostelium discoideum (Social amoeba) protein is Elongation factor 1-beta (efa1B).